Reading from the N-terminus, the 1169-residue chain is Flocculation protein FLO10 (1169 aa).

Positions 1–24 (MPVAARYIFLTGLFLLSVANVALG) are cleaved as a signal peptide. In terms of domain architecture, PA14 spans 111-271 (PVKRGVKLCS…GTEVNDDFEG (161 aa)). 3 N-linked (GlcNAc...) asparagine glycosylation sites follow: Asn122, Asn157, and Asn279. 10 tandem repeats follow at residues 303–326 (SSWSSSEVCTECTETESTSYVTPY), 330–356 (SSWSSSEVCTECTETESTSTSTPYVTS), 357–383 (SSSSSSEVCTECTETESTSYVTPYVSS), 384–419 (STAAANYTSSFSSSSEVCTECTETESTSTSTPYVTS), 420–446 (SSWSSSEVCTECTETESTSYVTPYVSS), 447–482 (STAAANYTSSFSSSSEVCTECTETESTSTSTPYVTS), 483–509 (SSSSSSEVCTECTETESTSYVTPYVSS), 510–545 (STAAANYTSSFSSSSEVCTECTETESTSTSTPYVTS), 546–572 (SSWSSSEVCTECTETESTSYVTPYVSS), and 573–608 (STAAANYTSSFSSSSEVCTECTETESTSTSTPYATS). Positions 303–572 (SSWSSSEVCT…TSYVTPYVSS (270 aa)) are 6 X 27 AA approximate repeats, Ser/Thr-rich. The 4 X 36 AA approximate repeats, Ser/Thr-rich stretch occupies residues 384–608 (STAAANYTSS…TSTSTPYATS (225 aa)). The N-linked (GlcNAc...) asparagine glycan is linked to Asn389. N-linked (GlcNAc...) asparagine glycosylation occurs at Asn452. Residue Asn515 is glycosylated (N-linked (GlcNAc...) asparagine). N-linked (GlcNAc...) asparagine glycans are attached at residues Asn578, Asn656, and Asn686. The segment covering 798–819 (TKVSSSESSESHRTSPTTSSES) has biased composition (low complexity). Disordered regions lie at residues 798–837 (TKVSSSESSESHRTSPTTSSESGIKSSGVEIESTSTSSFS), 856–920 (TPSS…SRDR), and 1070–1107 (RNNNFVPTSGTTSIETHTTTTSNASENSDNVSASEAVS). The segment covering 856–884 (TPSSPISTVAPRSTGLNSQTESTNSSKET) has biased composition (polar residues). Asn879 is a glycosylation site (N-linked (GlcNAc...) asparagine). Positions 886 to 902 (SSENSASVMPSSSATSP) are enriched in low complexity. Residues 906 to 916 (KVTSDETSSGF) show a composition bias toward polar residues. Residues 1077-1107 (TSGTTSIETHTTTTSNASENSDNVSASEAVS) show a composition bias toward low complexity. Asn1092 and Asn1099 each carry an N-linked (GlcNAc...) asparagine glycan. Residue Gly1146 is the site of GPI-anchor amidated glycine attachment. Residues 1147-1169 (IANHLLTNSGISIFIASLLLAIV) constitute a propeptide, removed in mature form.

Belongs to the flocculin family. Extensively O-glycosylated. In terms of processing, the GPI-anchor is attached to the protein in the endoplasmic reticulum and serves to target the protein to the cell surface. There, the glucosamine-inositol phospholipid moiety is cleaved off and the GPI-modified mannoprotein is covalently attached via its lipidless GPI glycan remnant to the 1,6-beta-glucan of the outer cell wall layer.

The protein resides in the secreted. It localises to the cell wall. It is found in the membrane. In terms of biological role, cell wall protein that participates directly in adhesive cell-cell interactions during yeast flocculation, a reversible, asexual and Ca(2+)-dependent process in which cells adhere to form aggregates (flocs) consisting of thousands of cells. The lectin-like protein sticks out of the cell wall of flocculent cells and selectively binds mannose residues in the cell walls of adjacent cells. Activity is inhibited by mannose, glucose, maltose and sucrose. Also involved in cell-substrate adhesion, haploid invasive growth and diploid pseudohyphae formation. The polypeptide is Flocculation protein FLO10 (FLO10) (Saccharomyces cerevisiae (strain ATCC 204508 / S288c) (Baker's yeast)).